Here is a 155-residue protein sequence, read N- to C-terminus: Ribosomal RNA large subunit methyltransferase H (155 aa).

S-adenosyl-L-methionine contacts are provided by residues Leu72, Gly103, and 122–127 (LSPLTL).

Belongs to the RNA methyltransferase RlmH family. As to quaternary structure, homodimer.

It localises to the cytoplasm. The catalysed reaction is pseudouridine(1915) in 23S rRNA + S-adenosyl-L-methionine = N(3)-methylpseudouridine(1915) in 23S rRNA + S-adenosyl-L-homocysteine + H(+). Its function is as follows. Specifically methylates the pseudouridine at position 1915 (m3Psi1915) in 23S rRNA. This Histophilus somni (strain 129Pt) (Haemophilus somnus) protein is Ribosomal RNA large subunit methyltransferase H.